We begin with the raw amino-acid sequence, 353 residues long: Photosystem II D2 protein (353 aa).

Thr2 is modified (N-acetylthreonine). Position 2 is a phosphothreonine (Thr2). The chain crosses the membrane as a helical span at residues 41 to 61; sequence CAYFALGGWFTGTTFVTSWYT. His118 is a chlorophyll a binding site. Residues 125–141 form a helical membrane-spanning segment; it reads GFMLRQFELARSVQLRP. The pheophytin a site is built by Gln130 and Asn143. Residues 153 to 166 form a helical membrane-spanning segment; sequence VFVSVFLIYPLGQS. His198 is a binding site for chlorophyll a. Residues 208–228 form a helical membrane-spanning segment; the sequence is AALLCAIHGATVENTLFEDGD. A plastoquinone-binding residues include His215 and Phe262. His215 is a binding site for Fe cation. His269 provides a ligand contact to Fe cation. The chain crosses the membrane as a helical span at residues 279 to 295; that stretch reads GLWMSAIGVVGLALNLR.

It belongs to the reaction center PufL/M/PsbA/D family. In terms of assembly, PSII is composed of 1 copy each of membrane proteins PsbA, PsbB, PsbC, PsbD, PsbE, PsbF, PsbH, PsbI, PsbJ, PsbK, PsbL, PsbM, PsbT, PsbX, PsbY, PsbZ, Psb30/Ycf12, at least 3 peripheral proteins of the oxygen-evolving complex and a large number of cofactors. It forms dimeric complexes. The D1/D2 heterodimer binds P680, chlorophylls that are the primary electron donor of PSII, and subsequent electron acceptors. It shares a non-heme iron and each subunit binds pheophytin, quinone, additional chlorophylls, carotenoids and lipids. There is also a Cl(-1) ion associated with D1 and D2, which is required for oxygen evolution. The PSII complex binds additional chlorophylls, carotenoids and specific lipids. serves as cofactor.

It is found in the plastid. The protein resides in the chloroplast thylakoid membrane. It carries out the reaction 2 a plastoquinone + 4 hnu + 2 H2O = 2 a plastoquinol + O2. Functionally, photosystem II (PSII) is a light-driven water:plastoquinone oxidoreductase that uses light energy to abstract electrons from H(2)O, generating O(2) and a proton gradient subsequently used for ATP formation. It consists of a core antenna complex that captures photons, and an electron transfer chain that converts photonic excitation into a charge separation. The D1/D2 (PsbA/PsbD) reaction center heterodimer binds P680, the primary electron donor of PSII as well as several subsequent electron acceptors. D2 is needed for assembly of a stable PSII complex. This chain is Photosystem II D2 protein, found in Lolium perenne (Perennial ryegrass).